We begin with the raw amino-acid sequence, 226 residues long: tRNA (guanine-N(7)-)-methyltransferase (226 aa).

S-adenosyl-L-methionine is bound by residues E57, E82, D109, and D132. Residue D132 is part of the active site. Residues K136, D168, and 205 to 208 contribute to the substrate site; that span reads TKFE.

The protein belongs to the class I-like SAM-binding methyltransferase superfamily. TrmB family.

It catalyses the reaction guanosine(46) in tRNA + S-adenosyl-L-methionine = N(7)-methylguanosine(46) in tRNA + S-adenosyl-L-homocysteine. The protein operates within tRNA modification; N(7)-methylguanine-tRNA biosynthesis. Functionally, catalyzes the formation of N(7)-methylguanine at position 46 (m7G46) in tRNA. This Legionella pneumophila subsp. pneumophila (strain Philadelphia 1 / ATCC 33152 / DSM 7513) protein is tRNA (guanine-N(7)-)-methyltransferase.